The primary structure comprises 547 residues: Chaperonin GroEL 1 (547 aa).

ATP contacts are provided by residues 30–33 (TLGP), K51, 87–91 (DGTTT), G415, and D494. Residues 524-547 (PKGKAKGGGAGAGMPDYGGDDMDY) are disordered.

This sequence belongs to the chaperonin (HSP60) family. Forms a cylinder of 14 subunits composed of two heptameric rings stacked back-to-back. Interacts with the co-chaperonin GroES.

It localises to the cytoplasm. The enzyme catalyses ATP + H2O + a folded polypeptide = ADP + phosphate + an unfolded polypeptide.. Its function is as follows. Together with its co-chaperonin GroES, plays an essential role in assisting protein folding. The GroEL-GroES system forms a nano-cage that allows encapsulation of the non-native substrate proteins and provides a physical environment optimized to promote and accelerate protein folding. In Myxococcus xanthus (strain DK1622), this protein is Chaperonin GroEL 1.